A 436-amino-acid chain; its full sequence is Trigger factor (436 aa).

Residues 163–248 (GDRVVLDFAG…VKEVAEGVLP (86 aa)) enclose the PPIase FKBP-type domain.

Belongs to the FKBP-type PPIase family. Tig subfamily.

The protein resides in the cytoplasm. The enzyme catalyses [protein]-peptidylproline (omega=180) = [protein]-peptidylproline (omega=0). Functionally, involved in protein export. Acts as a chaperone by maintaining the newly synthesized protein in an open conformation. Functions as a peptidyl-prolyl cis-trans isomerase. This chain is Trigger factor, found in Bordetella pertussis (strain Tohama I / ATCC BAA-589 / NCTC 13251).